We begin with the raw amino-acid sequence, 183 residues long: MAMYTSESERDWRRVIHDSHGLWCDCGDWREHLYCVYDSHFQRRPTTRAERRAANWRRQMRRLHRLWCFCQDWKCHALYAEWDGKESDDESSASSSGEAPEQQVPAWKTVRAFSRAYHHRINRGLRGTPPPRNLPGYEHASEGWRFCSRRERREDDLRTRAEPDRVVFQLGGVPPRRHRETYV.

Belongs to the herpesviridae US1 family.

This is an uncharacterized protein from Human cytomegalovirus (strain AD169) (HHV-5).